Consider the following 451-residue polypeptide: tRNA(Ile)-lysidine synthase (451 aa).

21–26 lines the ATP pocket; that stretch reads SGGLDS.

It belongs to the tRNA(Ile)-lysidine synthase family.

The protein localises to the cytoplasm. It carries out the reaction cytidine(34) in tRNA(Ile2) + L-lysine + ATP = lysidine(34) in tRNA(Ile2) + AMP + diphosphate + H(+). Functionally, ligates lysine onto the cytidine present at position 34 of the AUA codon-specific tRNA(Ile) that contains the anticodon CAU, in an ATP-dependent manner. Cytidine is converted to lysidine, thus changing the amino acid specificity of the tRNA from methionine to isoleucine. The sequence is that of tRNA(Ile)-lysidine synthase from Yersinia pseudotuberculosis serotype O:1b (strain IP 31758).